Reading from the N-terminus, the 750-residue chain is Phosphate transporter PHO1 homolog 7 (750 aa).

An SPX domain is found at 1–298; the sequence is MKFGKDFVRQ…SRSAAKPYME (298 aa). At 1–350 the chain is on the cytoplasmic side; sequence MKFGKDFVRQ…KVKKEKHRIT (350 aa). A helical transmembrane segment spans residues 351–371; it reads FSTGFFVGCTVSLVVALVMFI. Over 372–391 the chain is Extracellular; it reads HARNIMGAVGHKVYMETMFP. The helical transmembrane segment at 392-412 threads the bilayer; sequence LYSLFAFVVLHMIMYASNIYF. Residues 413-435 are Cytoplasmic-facing; sequence WKRYRVNYPFIFGFKEGTELGYR. The helical transmembrane segment at 436-456 threads the bilayer; it reads HVLLLSFGLGTLALCAVLINL. The Extracellular portion of the chain corresponds to 457–472; it reads DMEMDPNTNDYKTMTE. A helical transmembrane segment spans residues 473–493; sequence LLPMFILALVVAILFCPFNIF. The Cytoplasmic segment spans residues 494–622; it reads YRSSRVFFLM…YSFNRGNIWK (129 aa). The region spanning 557–750 is the EXS domain; sequence RSSDVYSTFY…NYNEEEDRDS (194 aa). A helical membrane pass occupies residues 623–643; sequence ISAWVFSALATFYGTYWDIVF. Residues 644 to 666 are Extracellular-facing; the sequence is DWGLLHRPSKHLLREKLLVPHKA. Residues 667–687 form a helical membrane-spanning segment; it reads VYYVAIVLNIVLRMAWLQTVL. At 688-750 the chain is on the cytoplasmic side; it reads DFNLSFLHRE…NYNEEEDRDS (63 aa).

It belongs to the SYG1 (TC 2.A.94) family. As to expression, expressed in root tips, vascular cylinders of roots and filaments, leaf hydathodes, stem, receptacle and stigma apex.

It localises to the cell membrane. Functionally, may transport inorganic phosphate (Pi). The chain is Phosphate transporter PHO1 homolog 7 (PHO1-H7) from Arabidopsis thaliana (Mouse-ear cress).